A 572-amino-acid chain; its full sequence is 3-ketosteroid oxygenase (572 aa).

Helical transmembrane passes span 52 to 72 and 84 to 104; these read AFAL…RNFL and YFMR…FIRI.

The protein belongs to the cytochrome P450 family. As to expression, expressed in the 2 embryonic head hypodermal cells XXXL/R.

It localises to the membrane. The catalysed reaction is 5alpha-cholest-7-en-3-one + 3 reduced [NADPH--hemoprotein reductase] + 3 O2 = (25S)-Delta7-dafachronate + 3 oxidized [NADPH--hemoprotein reductase] + 4 H2O + 4 H(+). It catalyses the reaction cholest-4-en-3-one + 3 reduced [NADPH--hemoprotein reductase] + 3 O2 = (25S)-3-oxocholest-4-en-26-oate + 3 oxidized [NADPH--hemoprotein reductase] + 4 H2O + 4 H(+). It participates in steroid hormone biosynthesis; dafachronic acid biosynthesis. Converts the 3-keto steroids 4-cholesten-3-one and lathosterone into the carboxylic metabolites 3-keto-4-cholestenate (Delta(4)-dafachronic acid, Delta(4)-DA) and 3-keto-7,(5a)-cholestenate (Delta(7)-dafachronic acid, Delta(7)-DA) respectively, by catalyzing successive oxidations at C-26. Dafachronic acids bind directly to the nuclear hormone receptor (NHR) DAF-12, suppressing dauer formation and inducing reproductive growth. In a non-cell autonomous manner, negatively regulates body wall muscle arm extensions to motor neurons probably by preventing daf-12 isoform b activation. May be involved in thermotolerance. In Caenorhabditis elegans, this protein is 3-ketosteroid oxygenase (daf-9).